Consider the following 267-residue polypeptide: 4-hydroxy-tetrahydrodipicolinate reductase (267 aa).

NAD(+) contacts are provided by residues 8 to 13 and E34; that span reads GAGGRM. An NADP(+)-binding site is contributed by R35. Residues 98-100 and 122-125 each bind NAD(+); these read GTT and APNM. H155 functions as the Proton donor/acceptor in the catalytic mechanism. (S)-2,3,4,5-tetrahydrodipicolinate is bound at residue H156. K159 serves as the catalytic Proton donor. 165–166 lines the (S)-2,3,4,5-tetrahydrodipicolinate pocket; sequence GT.

Belongs to the DapB family.

It is found in the cytoplasm. The catalysed reaction is (S)-2,3,4,5-tetrahydrodipicolinate + NAD(+) + H2O = (2S,4S)-4-hydroxy-2,3,4,5-tetrahydrodipicolinate + NADH + H(+). It catalyses the reaction (S)-2,3,4,5-tetrahydrodipicolinate + NADP(+) + H2O = (2S,4S)-4-hydroxy-2,3,4,5-tetrahydrodipicolinate + NADPH + H(+). The protein operates within amino-acid biosynthesis; L-lysine biosynthesis via DAP pathway; (S)-tetrahydrodipicolinate from L-aspartate: step 4/4. Its function is as follows. Catalyzes the conversion of 4-hydroxy-tetrahydrodipicolinate (HTPA) to tetrahydrodipicolinate. In Thioalkalivibrio sulfidiphilus (strain HL-EbGR7), this protein is 4-hydroxy-tetrahydrodipicolinate reductase.